Here is a 445-residue protein sequence, read N- to C-terminus: Hydroxycinnamoyl-CoA:5-hydroxyanthranilate N-hydroxycinnamoyltransferase HHT4 (445 aa).

It belongs to the plant acyltransferase family.

The catalysed reaction is 5-hydroxyanthranilate + (E)-4-coumaroyl-CoA = avenanthramide A + CoA. It catalyses the reaction 5-hydroxyanthranilate + (E)-caffeoyl-CoA = avenanthramide C + CoA. Its function is as follows. Involved in the biosynthesis of avenanthramide phytoalexins, which are phenolic alkaloids found mainly in oats. Catalyzes the N-acylation of 5-hydroxyanthranilate with 4-coumaroyl-CoA or caffeoyl-CoA as acyl donors, forming avenanthramide A and avenanthramide C, respectively. Does not accept feruloyl-CoA as a substrate. This chain is Hydroxycinnamoyl-CoA:5-hydroxyanthranilate N-hydroxycinnamoyltransferase HHT4, found in Avena sativa (Oat).